A 194-amino-acid chain; its full sequence is Adenylate kinase (194 aa).

An ATP-binding site is contributed by 11–16; sequence GSGKGT. The NMP stretch occupies residues 31 to 60; the sequence is STGELLRAEIKAQTELGQAAAGYINEGHLV. AMP is bound by residues Thr-32, Arg-37, 58-60, 86-89, and Gln-93; these read HLV and GFPR. Residues 127–137 form an LID region; it reads NRGKVSGRSDD. Arg-128 is a binding site for ATP. 2 residues coordinate AMP: Arg-134 and Arg-145. Residue Gly-173 coordinates ATP.

The protein belongs to the adenylate kinase family. In terms of assembly, monomer.

The protein localises to the cytoplasm. It catalyses the reaction AMP + ATP = 2 ADP. The protein operates within purine metabolism; AMP biosynthesis via salvage pathway; AMP from ADP: step 1/1. Functionally, catalyzes the reversible transfer of the terminal phosphate group between ATP and AMP. Plays an important role in cellular energy homeostasis and in adenine nucleotide metabolism. In Porphyromonas gingivalis (strain ATCC BAA-308 / W83), this protein is Adenylate kinase.